A 219-amino-acid chain; its full sequence is Leukocyte surface antigen CD53 (219 aa).

Residues 1–11 lie on the Cytoplasmic side of the membrane; sequence MGMSSLKLLKY. Residues 12-32 traverse the membrane as a helical segment; the sequence is VLFFFNLLFWICGCCILGFGI. Residues 33–54 lie on the Extracellular side of the membrane; that stretch reads YLLIHNNFGVLFHNLPSLTLGN. Residues 55-69 form a helical membrane-spanning segment; it reads VFVIVGSIIMVVAFL. The Cytoplasmic segment spans residues 70–80; sequence GCMGSIKENKC. Residues 81 to 106 traverse the membrane as a helical segment; sequence LLMSFFILLLIILLAEVTLAILLFVY. Over 107–181 the chain is Extracellular; that stretch reads EQKLNEYVAK…AKARLWFHSN (75 aa). Residues N129 and N148 are each glycosylated (N-linked (GlcNAc...) asparagine). The helical transmembrane segment at 182–206 threads the bilayer; sequence FLYIGIITICVCVIEVLGMSFALTL. Residues 207–219 lie on the Cytoplasmic side of the membrane; the sequence is NCQIDKTSQTIGL.

It belongs to the tetraspanin (TM4SF) family. Interacts with SCIMP. Interacts with CD45/PTPRC. Interacts with IL7R. Interacts with RBL2 and PPP2CA. In terms of tissue distribution, B-cells, monocytes, macrophages, neutrophils, single (CD4 or CD8) positive thymocytes and peripheral T-cells.

The protein resides in the cell membrane. It is found in the cell junction. It localises to the membrane. The protein localises to the synapse. Its function is as follows. Structural component of specialized membrane microdomains known as tetraspanin-enriched microdomains (TERMs), which act as platforms for receptor clustering and signaling. Participates thereby in diverse biological functions such as cell signal transduction, adhesion, migration and protein trafficking. Plays a role in the activation of monocytes and B-cells. Acts as an essential regulator of B-cell development by promoting interleukin-7 receptor/IL7R signaling. Also promotes, in B-cells, the BCR signaling by recruiting PKC to the plasma membrane in order to phosphorylate its substrates. Plays an essential role in B- and T-cells homing to lymph nodes by stabilizing L-selectin/SELL cell surface expression. Also mediates metabolic and inflammatory functions in hepatocytes and adipose tissue by promoting TNF-alpha and LPS signaling independent of the immune compartment. This is Leukocyte surface antigen CD53 (CD53) from Homo sapiens (Human).